We begin with the raw amino-acid sequence, 550 residues long: 65-kDa microtubule-associated protein 5 (550 aa).

Coiled coils occupy residues 46–174 (NKKV…QKVN) and 288–310 (IREA…KELV). The disordered stretch occupies residues 471 to 531 (QFREQKRLQG…PGRSVTSGGK (61 aa)). The segment covering 502-511 (QSLNTDNVTK) has biased composition (polar residues).

This sequence belongs to the MAP65/ASE1 family. In terms of assembly, forms a dimer. Binds to MT, mostly with coaligned MT, both between parallel or antiparallel, forming thick bundles. Bundles polymerized MT via the formation of 25-nm crossbridges with cortical MT.

Its subcellular location is the nucleus. It localises to the cytoplasm. It is found in the cytoskeleton. The protein localises to the spindle. The protein resides in the phragmoplast. Its subcellular location is the cell cortex. It localises to the cell junction. It is found in the plasmodesma. Microtubule-associated protein that bundle and stabilize adjacent microtubules (MT) of the cell cortex. Confers MT resistance to the drug oryzalin. Promotes the formation of a planar network of antiparallel microtubules. The sequence is that of 65-kDa microtubule-associated protein 5 (MAP65-5) from Arabidopsis thaliana (Mouse-ear cress).